A 563-amino-acid polypeptide reads, in one-letter code: Developmental regulatory protein wetA (563 aa).

2 stretches are compositionally biased toward polar residues: residues 54 to 69 (EQSP…THPS) and 160 to 175 (HKQS…SQFQ). Disordered stretches follow at residues 54 to 81 (EQSP…SLPP), 112 to 176 (ASST…QFQK), 272 to 318 (SNNS…PDLQ), 334 to 356 (PQRQ…IQNT), 430 to 494 (PQLH…SPKG), and 516 to 538 (GVAP…DRRR). The segment covering 272–305 (SNNSTVTSSPPSADDIFPSPHSSDPQSMSSWHSD) has biased composition (low complexity). The segment covering 430–441 (PQLHPQSRSPSL) has biased composition (polar residues).

Belongs to the wetA family.

Its function is as follows. BrlA, abaA and wetA are pivotal regulators of conidiophore development and conidium maturation. They act individually and together to regulate their own expression and that of numerous other sporulation-specific genes. The polypeptide is Developmental regulatory protein wetA (Aspergillus oryzae (strain ATCC 42149 / RIB 40) (Yellow koji mold)).